Consider the following 654-residue polypeptide: Macrolide export ATP-binding/permease protein MacB (654 aa).

The 239-residue stretch at 6-244 folds into the ABC transporter domain; that stretch reads LKVEDLTRRF…EQAAKTPSAS (239 aa). 42–49 is an ATP binding site; the sequence is GASGSGKS. 4 helical membrane-spanning segments follow: residues 280–300, 529–549, 584–604, and 619–639; these read FLTM…VALG, LLIS…VMNI, LVCL…GFAF, and SIIW…FLPA.

The protein belongs to the ABC transporter superfamily. Macrolide exporter (TC 3.A.1.122) family. Homodimer. Part of the tripartite efflux system MacAB-TolC, which is composed of an inner membrane transporter, MacB, a periplasmic membrane fusion protein, MacA, and an outer membrane component, TolC. The complex forms a large protein conduit and can translocate molecules across both the inner and outer membranes. Interacts with MacA.

The protein localises to the cell inner membrane. Its function is as follows. Part of the tripartite efflux system MacAB-TolC. MacB is a non-canonical ABC transporter that contains transmembrane domains (TMD), which form a pore in the inner membrane, and an ATP-binding domain (NBD), which is responsible for energy generation. Confers resistance against macrolides. This is Macrolide export ATP-binding/permease protein MacB from Vibrio parahaemolyticus serotype O3:K6 (strain RIMD 2210633).